The primary structure comprises 299 residues: Probable lipid kinase YegS (299 aa).

A DAGKc domain is found at 2–133; it reads ANFPASLLIL…IDMARVNDKT (132 aa). Residues Thr-40, 66–72, and Thr-95 each bind ATP; that span reads GDGTINE. Residues Leu-215, Asp-218, and Leu-220 each contribute to the Mg(2+) site. Glu-271 acts as the Proton acceptor in catalysis.

This sequence belongs to the diacylglycerol/lipid kinase family. YegS lipid kinase subfamily. Mg(2+) is required as a cofactor. The cofactor is Ca(2+).

The protein resides in the cytoplasm. Its function is as follows. Probably phosphorylates lipids; the in vivo substrate is unknown. This chain is Probable lipid kinase YegS, found in Salmonella gallinarum (strain 287/91 / NCTC 13346).